We begin with the raw amino-acid sequence, 160 residues long: Cytochrome b6-f complex subunit 4 (160 aa).

3 helical membrane passes run 36-56 (LLYI…GLAV), 95-115 (LLGV…PFLE), and 131-151 (TVFL…ALPI).

This sequence belongs to the cytochrome b family. PetD subfamily. As to quaternary structure, the 4 large subunits of the cytochrome b6-f complex are cytochrome b6, subunit IV (17 kDa polypeptide, petD), cytochrome f and the Rieske protein, while the 4 small subunits are petG, petL, petM and petN. The complex functions as a dimer.

It localises to the plastid. Its subcellular location is the chloroplast thylakoid membrane. In terms of biological role, component of the cytochrome b6-f complex, which mediates electron transfer between photosystem II (PSII) and photosystem I (PSI), cyclic electron flow around PSI, and state transitions. This Spirogyra maxima (Green alga) protein is Cytochrome b6-f complex subunit 4.